The sequence spans 814 residues: Dimethyl sulfoxide reductase DmsA (814 aa).

The segment at residues 1 to 45 (MKTKIPDAVLAAEVSRRGLVKTTAIGGLAMASSALTLPFSRIAHA) is a signal peptide (tat-type signal). The 63-residue stretch at 56-118 (EKVIWSACTV…SMRRRVYNPD (63 aa)) folds into the 4Fe-4S Mo/W bis-MGD-type domain. Residues Cys63, Cys67, Cys71, and Cys104 each contribute to the [4Fe-4S] cluster site. Residues 172–176 (LGGTM), Ser205, 244–245 (ET), 270–271 (ID), 291–293 (GTD), 386–387 (WG), Arg390, Asn488, 512–513 (ID), His701, 707–709 (HST), Asn788, and 804–805 (SH) each bind Mo-bis(molybdopterin guanine dinucleotide).

The protein belongs to the prokaryotic molybdopterin-containing oxidoreductase family. In terms of assembly, heterotrimeric enzyme composed of a catalytic heterodimer (DmsAB) and a membrane anchor protein (DmsC). It depends on [4Fe-4S] cluster as a cofactor. Mo-bis(molybdopterin guanine dinucleotide) is required as a cofactor. Post-translationally, exported by the Tat system. The position of the signal peptide cleavage has been experimentally proven. Can also be exported by the Sec system.

The protein resides in the cell membrane. The enzyme catalyses dimethyl sulfide + a menaquinone + H2O = dimethyl sulfoxide + a menaquinol. Its activity is regulated as follows. Inhibited by dithionite, sodium hydrogensulfite and tungstate. Its function is as follows. Catalyzes the reduction of dimethyl sulfoxide (DMSO) to dimethyl sulfide (DMS). DMSO reductase serves as the terminal reductase under anaerobic conditions, with DMSO being the terminal electron acceptor. Terminal reductase during anaerobic growth on various sulfoxides and N-oxide compounds. Allows E.coli to grow anaerobically on DMSO as respiratory oxidant. This is Dimethyl sulfoxide reductase DmsA (dmsA) from Escherichia coli (strain K12).